The primary structure comprises 220 residues: Vesicle-associated membrane protein 7 (220 aa).

At Ala2 the chain carries N-acetylalanine. Over 2 to 188 (AILFAVVARG…ARAMCMKNLK (187 aa)) the chain is Cytoplasmic. Residues 7 to 110 (VVARGTTILA…AMNSEFSSVL (104 aa)) form the Longin domain. In terms of domain architecture, v-SNARE coiled-coil homology spans 125–185 (KVMETQAQVD…RNLARAMCMK (61 aa)). Ser167 and Ser168 each carry phosphoserine. A helical; Anchor for type IV membrane protein membrane pass occupies residues 189–209 (LTIIIIIISVVFIYIIVSPLC). Topologically, residues 210–220 (GGFTWPNCVKK) are vesicular.

The protein belongs to the synaptobrevin family. In terms of assembly, component of the SNARE complex composed of STX4, SNAP23 and VAMP7 that binds SYT7 during lysosomal exocytosis. Component of the SNARE complex composed of STX7, STX8, VAMP7 and VTI1B that is required for heterotypic fusion of late endosomes with lysosomes. May interact with STX17. Interacts with PICALM. Interacts with RAB21.

Its subcellular location is the cytoplasmic vesicle. It is found in the secretory vesicle membrane. The protein resides in the golgi apparatus. The protein localises to the trans-Golgi network membrane. It localises to the late endosome membrane. Its subcellular location is the lysosome membrane. It is found in the endoplasmic reticulum membrane. The protein resides in the phagosome membrane. The protein localises to the synapse. It localises to the synaptosome. In terms of biological role, involved in the targeting and/or fusion of transport vesicles to their target membrane during transport of proteins from the early endosome to the lysosome. Required for heterotypic fusion of late endosomes with lysosomes and homotypic lysosomal fusion. Required for calcium regulated lysosomal exocytosis. Involved in the export of chylomicrons from the endoplasmic reticulum to the cis Golgi. Required for exocytosis of mediators during eosinophil and neutrophil degranulation, and target cell killing by natural killer cells. Required for focal exocytosis of late endocytic vesicles during phagosome formation. The polypeptide is Vesicle-associated membrane protein 7 (VAMP7) (Bos taurus (Bovine)).